The chain runs to 469 residues: tRNA (cytosine(72)-C(5))-methyltransferase NSUN6 (469 aa).

The PUA domain maps to 111–203; that stretch reads QCEAIVGAQC…MGIRMTEPVY (93 aa). Residues 242–248, Asp266, Asp293, and Asp323 each bind S-adenosyl-L-methionine; that span reads CAAPGGK. The Nucleophile role is filled by Cys373. Lys419 bears the N6-acetyllysine mark.

The protein belongs to the class I-like SAM-binding methyltransferase superfamily. RsmB/NOP family.

It localises to the cytoplasm. The enzyme catalyses cytidine(72) in tRNA(Thr) + S-adenosyl-L-methionine = 5-methylcytidine(72) in tRNA(Thr) + S-adenosyl-L-homocysteine + H(+). The catalysed reaction is cytidine(72) in tRNA(Cys) + S-adenosyl-L-methionine = 5-methylcytidine(72) in tRNA(Cys) + S-adenosyl-L-homocysteine + H(+). Functionally, S-adenosyl-L-methionine-dependent methyltransferase that specifically methylates the C5 position of cytosine 72 in tRNA(Thr)(TGT) and tRNA(Cys)(GCA). In vitro also methylates tRNA(Thr)(AGT). Methylation requires, in the acceptor stem region, the presence of the 3'-CCA terminus, the target site C72, the discriminator base U73, and the second and third base pairs (2:71 and 3:70) in the tRNA substrates. This chain is tRNA (cytosine(72)-C(5))-methyltransferase NSUN6, found in Homo sapiens (Human).